Here is a 1036-residue protein sequence, read N- to C-terminus: UDP-N-acetylglucosamine--peptide N-acetylglucosaminyltransferase 110 kDa subunit (1036 aa).

Ala2 carries the N-acetylalanine modification. Ser3 and Ser4 each carry phosphoserine; by GSK3-beta; alternate. O-linked (GlcNAc) serine; alternate glycans are attached at residues Ser3 and Ser4. TPR repeat units lie at residues 11 to 44 (STGL…EPDN), 79 to 112 (AEAY…KPDF), 113 to 146 (IDGY…NPDL), 147 to 180 (YCVR…QPNF), 181 to 214 (AVAW…DPNF), 215 to 248 (LDAY…SPNH), 249 to 282 (AVVH…QPHF), 283 to 316 (PDAY…CPTH), 317 to 350 (ADSL…FPEF), 351 to 384 (AAAH…SPTF), 385 to 418 (ADAY…NPAF), and 419 to 452 (ADAH…KPDF). A glycan (O-linked (GlcNAc) serine; by autocatalysis) is linked at Ser389. Position 444 is a phosphothreonine (Thr444). A TPR 13; truncated repeat occupies 453–463 (PDAYCNLAHCL). The DFP motif signature appears at 454–456 (DAY). The Nuclear localization signal motif lies at 478–493 (KLVSIVAEQLEKNRLP). His498 serves as the catalytic Proton acceptor. Residues Gln839, Lys842, 896–898 (APK), 901–904 (HVRR), 920–922 (HTT), and Asp925 each bind UDP. Tyr979 carries the post-translational modification Phosphotyrosine. A required for phosphatidylinositol 3,4,5-triphosphate binding region spans residues 981–1000 (KKIRGKVWKQRISSPLFNTK).

It belongs to the glycosyltransferase 41 family. O-GlcNAc transferase subfamily. Monomer; may exist in different oligomerization states in cells. Homotrimer, oligomerizes via TPR repeats 6 and 7. Trimerization is not necessary for activity in vitro, however it increases affinity for UDP-GlcNAc. A heterotrimer consisting of two 110 kDa subunits and one highly related 78 kDa subunit is isolated from liver. Component of a THAP1/THAP3-HCFC1-OGT complex. Component of the NSL complex at least composed of MOF/KAT8, KANSL1, KANSL2, KANSL3, MCRS1, PHF20, OGT1/OGT, WDR5 and HCFC1. Found in a complex with KIF5B, RHOT1, RHOT2 and TRAK1. Found in a complex composed of at least SINHCAF, SIN3A, HDAC1, SAP30, RBBP4, OGT and TET1. Component of a complex composed of KMT2E/MLL5, OGT and USP7; the complex stabilizes KMT2E/MLL5, preventing KMT2E/MLL5 ubiquitination and proteasomal-mediated degradation. Interacts (via TPRs 1-6) with SIN3A; the interaction mediates transcriptional repression in parallel with histone deacetylase. Interacts (via TPR 5-6) with TET1, TET2 and TET3. Interacts (via TPR repeats 6 and 7) with ATXN10. Interacts with NSD2. Interacts with PROSER1; this interaction mediates TET2 O-GlcNAcylation and stability by promoting the interaction between OGT and TET2. In terms of processing, several different immunologically-related forms of this protein are found in different tissues (with apparent molecular weights of 110, 80 and 78 kDa); they are probably the result of alternative splicing and/or proteolysis. O-glycosylated; contains O-GlcNAc. Both p110 and p78 forms are O-glycosylated. Post-translationally, ubiquitinated by the SCF(FBXO31) complex, leading to its proteasomal degradation. In terms of processing, phosphorylation on Ser-3 or Ser-4 by GSK3-beta positively regulates its activity. Phosphorylation at Thr-444 by AMPK promotes nuclear localization. Glycosylated via autocatalysis; O-GlcNAcylation at Ser-389 promotes nuclear localization. Expressed in brain, heart, liver, thymus, muscle, lung, spleen, uterus and ovary; in the kidney only an immunologically-related 78 kDa band is present, which is also present in liver and muscle. In the pancreas, expressed in both exocrine acinar cells and in endocrine cells of the islets of Langerhans.

The protein resides in the cytoplasm. It localises to the nucleus. Its subcellular location is the cell membrane. It is found in the mitochondrion membrane. The protein localises to the cell projection. It carries out the reaction L-seryl-[protein] + UDP-N-acetyl-alpha-D-glucosamine = 3-O-(N-acetyl-beta-D-glucosaminyl)-L-seryl-[protein] + UDP + H(+). The catalysed reaction is L-threonyl-[protein] + UDP-N-acetyl-alpha-D-glucosamine = 3-O-(N-acetyl-beta-D-glucosaminyl)-L-threonyl-[protein] + UDP + H(+). It participates in protein modification; protein glycosylation. Its activity is regulated as follows. Inhibited by UDP, UTP and UDP-GlcNAc; 50 mM NaCl or KCl inhibit activity about 70%. Catalyzes the transfer of a single N-acetylglucosamine from UDP-GlcNAc to a serine or threonine residue in cytoplasmic and nuclear proteins resulting in their modification with a beta-linked N-acetylglucosamine (O-GlcNAc). Glycosylates a large and diverse number of proteins including histone H2B, AKT1, AMPK, ATG4B, CAPRIN1, EZH2, FNIP1, GSDMD, KRT7, LMNA, LMNB1, LMNB2, RPTOR, HOXA1, PFKL, KMT2E/MLL5, MAPT/TAU, TET2, RBL2, RET, NOD2 and HCFC1. Can regulate their cellular processes via cross-talk between glycosylation and phosphorylation or by affecting proteolytic processing. Involved in insulin resistance in muscle and adipocyte cells via glycosylating insulin signaling components and inhibiting the 'Thr-308' phosphorylation of AKT1, enhancing IRS1 phosphorylation and attenuating insulin signaling. Involved in glycolysis regulation by mediating glycosylation of 6-phosphofructokinase PFKL, inhibiting its activity. Plays a key role in chromatin structure by mediating O-GlcNAcylation of 'Ser-112' of histone H2B: recruited to CpG-rich transcription start sites of active genes via its interaction with TET proteins (TET1, TET2 or TET3). As part of the NSL complex indirectly involved in acetylation of nucleosomal histone H4 on several lysine residues. O-GlcNAcylation of 'Ser-75' of EZH2 increases its stability, and facilitating the formation of H3K27me3 by the PRC2/EED-EZH2 complex. Stabilizes KMT2E/MLL5 by mediating its glycosylation, thereby preventing KMT2E/MLL5 ubiquitination. Regulates circadian oscillation of the clock genes and glucose homeostasis in the liver. Stabilizes clock proteins BMAL1 and CLOCK through O-glycosylation, which prevents their ubiquitination and subsequent degradation. Promotes the CLOCK-BMAL1-mediated transcription of genes in the negative loop of the circadian clock such as PER1/2 and CRY1/2. O-glycosylates HCFC1 and regulates its proteolytic processing and transcriptional activity. Component of a THAP1/THAP3-HCFC1-OGT complex that is required for the regulation of the transcriptional activity of RRM1. Regulates mitochondrial motility in neurons by mediating glycosylation of TRAK1. Promotes autophagy by mediating O-glycosylation of ATG4B. Acts as a regulator of mTORC1 signaling by mediating O-glycosylation of RPTOR and FNIP1: O-GlcNAcylation of RPTOR in response to glucose sufficiency promotes activation of the mTORC1 complex. The protein is UDP-N-acetylglucosamine--peptide N-acetylglucosaminyltransferase 110 kDa subunit (Ogt) of Rattus norvegicus (Rat).